The primary structure comprises 292 residues: Elongation factor Ts (292 aa).

Residues 80–83 (TDFV) form an involved in Mg(2+) ion dislocation from EF-Tu region.

This sequence belongs to the EF-Ts family.

It localises to the cytoplasm. In terms of biological role, associates with the EF-Tu.GDP complex and induces the exchange of GDP to GTP. It remains bound to the aminoacyl-tRNA.EF-Tu.GTP complex up to the GTP hydrolysis stage on the ribosome. This Psychrobacter sp. (strain PRwf-1) protein is Elongation factor Ts.